Consider the following 348-residue polypeptide: E3 ubiquitin-protein ligase MARCHF9 (348 aa).

The segment at 48-96 (ARDGDGDEEEYYGSEPRARGLAGDKEPRAGPPPPPAPPPPPPGALDALS) is disordered. Positions 63-75 (PRARGLAGDKEPR) are enriched in basic and acidic residues. The span at 76–90 (AGPPPPPAPPPPPPG) shows a compositional bias: pro residues. The segment at 102–162 (DSGLRTPQCR…ELCYFKYQVL (61 aa)) adopts an RING-CH-type zinc-finger fold. Residues C110, C113, C126, C128, H136, C139, C152, and C155 each contribute to the Zn(2+) site. 2 helical membrane-spanning segments follow: residues 185 to 205 (IAAI…LIWS) and 219 to 239 (LFQI…GLIV). Disordered regions lie at residues 272-304 (GDTG…AAQR) and 328-348 (PPDA…VTTV).

As to quaternary structure, homodimer.

The protein localises to the golgi apparatus membrane. The protein resides in the lysosome membrane. It catalyses the reaction S-ubiquitinyl-[E2 ubiquitin-conjugating enzyme]-L-cysteine + [acceptor protein]-L-lysine = [E2 ubiquitin-conjugating enzyme]-L-cysteine + N(6)-ubiquitinyl-[acceptor protein]-L-lysine.. The protein operates within protein modification; protein ubiquitination. E3 ubiquitin-protein ligase that may mediate ubiquitination of MHC-I, CD4 and ICAM1, and promote their subsequent endocytosis and sorting to lysosomes via multivesicular bodies. E3 ubiquitin ligases accept ubiquitin from an E2 ubiquitin-conjugating enzyme in the form of a thioester and then directly transfer the ubiquitin to targeted substrates. The protein is E3 ubiquitin-protein ligase MARCHF9 (Marchf9) of Mus musculus (Mouse).